A 378-amino-acid chain; its full sequence is MHEVSDKTNAIHPLQRVSRALFALGLLCFAAMAGAERIKDIATVEGVRSNQIVGYGLVVGLDGTGDKAPFTDQTFRNMMNRFGITIPAGTDPKLKNVAAVSVHADLPAFSKPGQKIDITVSSVGNAKSLRGGSLLMTNLKGADGKTYAVAQGNLVVGGFGAGGADGSSITVNVPSVGRIPNGATVERAVPSSFSHGDTLTLNLSSPDFTTAKRVQDRINDLLGPGLAQAVDAASIRVMAPREASQRVGFLSILENLEVEPGQEAAKIVINSRTGTIVVGQNVKVLPAAVTHGNLTVTITEDFGVSQPNALAGGDTVVVPQTDVNVEQEPSRMFKFGPAATLNDIVRAVNQVGAAPGDVMAVLEALKQAGALKAELIVI.

Positions 1–33 (MHEVSDKTNAIHPLQRVSRALFALGLLCFAAMA) are cleaved as a signal peptide.

It belongs to the FlgI family. As to quaternary structure, the basal body constitutes a major portion of the flagellar organelle and consists of four rings (L,P,S, and M) mounted on a central rod.

Its subcellular location is the periplasm. It is found in the bacterial flagellum basal body. Its function is as follows. Assembles around the rod to form the L-ring and probably protects the motor/basal body from shearing forces during rotation. The protein is Flagellar P-ring protein 2 of Hahella chejuensis (strain KCTC 2396).